Consider the following 101-residue polypeptide: UPF0134 protein MPN_675 (101 aa).

The protein belongs to the UPF0134 family.

This is UPF0134 protein MPN_675 from Mycoplasma pneumoniae (strain ATCC 29342 / M129 / Subtype 1) (Mycoplasmoides pneumoniae).